An 819-amino-acid chain; its full sequence is Probable cadmium/zinc-transporting ATPase HMA1, chloroplastic (819 aa).

The transit peptide at 1–17 directs the protein to the chloroplast; it reads MEPATLTRSSSLTRFPY. At 18–122 the chain is on the stromal side; sequence RRGLSTLRLA…IGWVRLANYL (105 aa). Over residues 66 to 79 the composition is skewed to basic and acidic residues; it reads DHHHDHHHDDEQDH. Residues 66–87 are disordered; it reads DHHHDHHHDDEQDHHNHHHHHH. Residues 123–144 traverse the membrane as a helical segment; it reads REHLHLCCSAAAMFLAAAVCPY. The Lumenal portion of the chain corresponds to 145–153; it reads LAPEPYIKS. Residues 154–173 traverse the membrane as a helical segment; sequence LQNAFMIVGFPLVGVSASLD. Topologically, residues 174–180 are stromal; sequence ALMDIAG. A helical membrane pass occupies residues 181 to 201; the sequence is GKVNIHVLMALAAFASVFMGN. Position 202 (Ala202) is a topological domain, lumenal. Residues 203-223 form a helical membrane-spanning segment; sequence LEGGLLLAMFNLAHIAEEFFT. Over 224–361 the chain is Stromal; that stretch reads SRSMVDVKEL…KPKLQRWLDE (138 aa). A helical membrane pass occupies residues 362–384; the sequence is FGENYSKVVVVLSLAIAFLGPFL. Topologically, residues 385-398 are lumenal; sequence FKWPFLSTAACRGS. Residues 399-416 traverse the membrane as a helical segment; the sequence is VYRALGLMVAASPCALAV. Residues 417–737 lie on the Stromal side of the membrane; it reads APLAYATAIS…AKSRQTTSLV (321 aa). Asp453 serves as the catalytic 4-aspartylphosphate intermediate. 2 residues coordinate Mg(2+): Glu682 and Asp686. The chain crosses the membrane as a helical span at residues 738-757; the sequence is KQNVALALTSIFLAALPSVL. At 758–762 the chain is on the lumenal side; sequence GFVPL. The helical transmembrane segment at 763-781 threads the bilayer; the sequence is WLTVLLHEGGTLLVCLNSV. Residues 782–819 lie on the Stromal side of the membrane; that stretch reads RGLNDPSWSWKQDIVHLINKLRSQEPTSSSSNSLSSAH.

Belongs to the cation transport ATPase (P-type) (TC 3.A.3) family. Type IB subfamily.

It localises to the plastid. The protein resides in the chloroplast inner membrane. It carries out the reaction Zn(2+)(in) + ATP + H2O = Zn(2+)(out) + ADP + phosphate + H(+). It catalyses the reaction Cd(2+)(in) + ATP + H2O = Cd(2+)(out) + ADP + phosphate + H(+). Involved in cadmium/zinc transport. The sequence is that of Probable cadmium/zinc-transporting ATPase HMA1, chloroplastic (HMA1) from Arabidopsis thaliana (Mouse-ear cress).